An 800-amino-acid polypeptide reads, in one-letter code: Structural protein ORF800 (800 aa).

Coiled coils occupy residues 98–130 (AENI…YNLA), 447–475 (LLAE…ANNL), 514–567 (AINQ…ANNL), and 606–633 (AINQ…NLLA). The segment at 759 to 800 (AESIAESESETTESENNETTESTANSEGEKQEGEHGARLIRV) is disordered. Residues 761 to 776 (SIAESESETTESENNE) show a composition bias toward acidic residues. A compositionally biased stretch (basic and acidic residues) spans 785–800 (EGEKQEGEHGARLIRV).

The protein resides in the virion. This Acidianus convivator (ATV) protein is Structural protein ORF800.